The chain runs to 255 residues: tRNA pseudouridine synthase A (255 aa).

Asp43 (nucleophile) is an active-site residue. A substrate-binding site is contributed by Tyr94.

This sequence belongs to the tRNA pseudouridine synthase TruA family.

It carries out the reaction uridine(38/39/40) in tRNA = pseudouridine(38/39/40) in tRNA. Its function is as follows. Formation of pseudouridine at positions 38, 39 and 40 in the anticodon stem and loop of transfer RNAs. The polypeptide is tRNA pseudouridine synthase A (Pyrobaculum neutrophilum (strain DSM 2338 / JCM 9278 / NBRC 100436 / V24Sta) (Thermoproteus neutrophilus)).